Reading from the N-terminus, the 317-residue chain is DNA-directed RNA polymerase subunit alpha 2 (317 aa).

The alpha N-terminal domain (alpha-NTD) stretch occupies residues 1–227 (MALENLLHPT…NQLRNIVDIE (227 aa)). The alpha C-terminal domain (alpha-CTD) stretch occupies residues 241 to 317 (INPILLKHVE…TLIENWPQDL (77 aa)).

The protein belongs to the RNA polymerase alpha chain family. Homodimer. The RNAP catalytic core consists of 2 alpha, 1 beta, 1 beta' and 1 omega subunit. When a sigma factor is associated with the core the holoenzyme is formed, which can initiate transcription.

It catalyses the reaction RNA(n) + a ribonucleoside 5'-triphosphate = RNA(n+1) + diphosphate. In terms of biological role, DNA-dependent RNA polymerase catalyzes the transcription of DNA into RNA using the four ribonucleoside triphosphates as substrates. The protein is DNA-directed RNA polymerase subunit alpha 2 of Francisella tularensis subsp. holarctica (strain LVS).